The primary structure comprises 168 residues: Crossover junction endodeoxyribonuclease RuvC (168 aa).

Residues Asp7, Glu64, and Asp136 contribute to the active site. Mg(2+) contacts are provided by Asp7, Glu64, and Asp136.

It belongs to the RuvC family. As to quaternary structure, homodimer which binds Holliday junction (HJ) DNA. The HJ becomes 2-fold symmetrical on binding to RuvC with unstacked arms; it has a different conformation from HJ DNA in complex with RuvA. In the full resolvosome a probable DNA-RuvA(4)-RuvB(12)-RuvC(2) complex forms which resolves the HJ. Requires Mg(2+) as cofactor.

Its subcellular location is the cytoplasm. It catalyses the reaction Endonucleolytic cleavage at a junction such as a reciprocal single-stranded crossover between two homologous DNA duplexes (Holliday junction).. The RuvA-RuvB-RuvC complex processes Holliday junction (HJ) DNA during genetic recombination and DNA repair. Endonuclease that resolves HJ intermediates. Cleaves cruciform DNA by making single-stranded nicks across the HJ at symmetrical positions within the homologous arms, yielding a 5'-phosphate and a 3'-hydroxyl group; requires a central core of homology in the junction. The consensus cleavage sequence is 5'-(A/T)TT(C/G)-3'. Cleavage occurs on the 3'-side of the TT dinucleotide at the point of strand exchange. HJ branch migration catalyzed by RuvA-RuvB allows RuvC to scan DNA until it finds its consensus sequence, where it cleaves and resolves the cruciform DNA. In Polynucleobacter necessarius subsp. necessarius (strain STIR1), this protein is Crossover junction endodeoxyribonuclease RuvC.